The primary structure comprises 180 residues: Peptidyl-tRNA hydrolase (180 aa).

Position 13 (tyrosine 13) interacts with tRNA. Residue histidine 18 is the Proton acceptor of the active site. The tRNA site is built by tyrosine 58, asparagine 60, and asparagine 100.

This sequence belongs to the PTH family. Monomer.

Its subcellular location is the cytoplasm. The enzyme catalyses an N-acyl-L-alpha-aminoacyl-tRNA + H2O = an N-acyl-L-amino acid + a tRNA + H(+). In terms of biological role, hydrolyzes ribosome-free peptidyl-tRNAs (with 1 or more amino acids incorporated), which drop off the ribosome during protein synthesis, or as a result of ribosome stalling. Catalyzes the release of premature peptidyl moieties from peptidyl-tRNA molecules trapped in stalled 50S ribosomal subunits, and thus maintains levels of free tRNAs and 50S ribosomes. This chain is Peptidyl-tRNA hydrolase, found in Fervidobacterium nodosum (strain ATCC 35602 / DSM 5306 / Rt17-B1).